Consider the following 56-residue polypeptide: Large ribosomal subunit protein bL32 (56 aa).

The protein belongs to the bacterial ribosomal protein bL32 family.

This Brevibacillus brevis (strain 47 / JCM 6285 / NBRC 100599) protein is Large ribosomal subunit protein bL32.